A 389-amino-acid chain; its full sequence is Sulfate adenylyltransferase (389 aa).

This sequence belongs to the sulfate adenylyltransferase family.

The enzyme catalyses sulfate + ATP + H(+) = adenosine 5'-phosphosulfate + diphosphate. It participates in sulfur metabolism; hydrogen sulfide biosynthesis; sulfite from sulfate: step 1/3. In Hyperthermus butylicus (strain DSM 5456 / JCM 9403 / PLM1-5), this protein is Sulfate adenylyltransferase.